The chain runs to 198 residues: Na(+)-translocating NADH-quinone reductase subunit E (198 aa).

6 consecutive transmembrane segments (helical) span residues 11-31 (SVFI…FLAV), 35-55 (VSTA…SVPV), 77-97 (FLNF…LEMI), 110-130 (GIFL…SFMV), 140-160 (VVYG…LAGI), and 176-196 (LGIT…FSGV).

Belongs to the NqrDE/RnfAE family. In terms of assembly, composed of six subunits; NqrA, NqrB, NqrC, NqrD, NqrE and NqrF.

The protein resides in the cell inner membrane. It catalyses the reaction a ubiquinone + n Na(+)(in) + NADH + H(+) = a ubiquinol + n Na(+)(out) + NAD(+). NQR complex catalyzes the reduction of ubiquinone-1 to ubiquinol by two successive reactions, coupled with the transport of Na(+) ions from the cytoplasm to the periplasm. NqrA to NqrE are probably involved in the second step, the conversion of ubisemiquinone to ubiquinol. The protein is Na(+)-translocating NADH-quinone reductase subunit E of Histophilus somni (strain 129Pt) (Haemophilus somnus).